The following is a 199-amino-acid chain: Outer-membrane lipoprotein LolB (199 aa).

The N-terminal stretch at M1–G28 is a signal peptide. A lipid anchor (N-palmitoyl cysteine) is attached at C29. The S-diacylglycerol cysteine moiety is linked to residue C29.

This sequence belongs to the LolB family. In terms of assembly, monomer.

Its subcellular location is the cell outer membrane. Functionally, plays a critical role in the incorporation of lipoproteins in the outer membrane after they are released by the LolA protein. The protein is Outer-membrane lipoprotein LolB of Bordetella petrii (strain ATCC BAA-461 / DSM 12804 / CCUG 43448).